A 339-amino-acid chain; its full sequence is D-erythrose-4-phosphate dehydrogenase (339 aa).

NAD(+) contacts are provided by residues 12-13 (RI) and Arg81. Substrate is bound by residues 154–156 (SCT), Arg200, 213–214 (TK), and Arg236. Residue Cys155 is the Nucleophile of the active site. Asn318 contacts NAD(+).

It belongs to the glyceraldehyde-3-phosphate dehydrogenase family. Epd subfamily. As to quaternary structure, homotetramer.

It localises to the cytoplasm. The catalysed reaction is D-erythrose 4-phosphate + NAD(+) + H2O = 4-phospho-D-erythronate + NADH + 2 H(+). Its pathway is cofactor biosynthesis; pyridoxine 5'-phosphate biosynthesis; pyridoxine 5'-phosphate from D-erythrose 4-phosphate: step 1/5. Catalyzes the NAD-dependent conversion of D-erythrose 4-phosphate to 4-phosphoerythronate. This Shigella dysenteriae serotype 1 (strain Sd197) protein is D-erythrose-4-phosphate dehydrogenase.